The chain runs to 134 residues: Putative nickel-responsive regulator (134 aa).

Residues H78, H89, H91, and C97 each coordinate Ni(2+).

The protein belongs to the transcriptional regulatory CopG/NikR family. It depends on Ni(2+) as a cofactor.

Functionally, transcriptional regulator. The chain is Putative nickel-responsive regulator from Chlorobaculum parvum (strain DSM 263 / NCIMB 8327) (Chlorobium vibrioforme subsp. thiosulfatophilum).